We begin with the raw amino-acid sequence, 206 residues long: Ribosomal RNA large subunit methyltransferase E (206 aa).

Positions 61, 63, 81, 97, and 122 each coordinate S-adenosyl-L-methionine. The Proton acceptor role is filled by Lys-162.

The protein belongs to the class I-like SAM-binding methyltransferase superfamily. RNA methyltransferase RlmE family.

The protein resides in the cytoplasm. It carries out the reaction uridine(2552) in 23S rRNA + S-adenosyl-L-methionine = 2'-O-methyluridine(2552) in 23S rRNA + S-adenosyl-L-homocysteine + H(+). In terms of biological role, specifically methylates the uridine in position 2552 of 23S rRNA at the 2'-O position of the ribose in the fully assembled 50S ribosomal subunit. This Neisseria meningitidis serogroup C / serotype 2a (strain ATCC 700532 / DSM 15464 / FAM18) protein is Ribosomal RNA large subunit methyltransferase E.